The sequence spans 354 residues: MATRQPYQKKFQSRDQREQTSSQQAPNSVVKQVTVDALVVMKIIKHARENPHEPVRGPLLGLSQLADASKPGEDALLEVTNCFPTPRVSDDDDDSIVQQYQVQMMRWLREVNVDHMNVGWYQAADMGTFFDEDVAAVQFQHQRHMAESVVLIYDPVLTLQGTLSLSAFRLSNKAMELFSTDSFNPKAVREAGLTYRTVFEKVPVTIRASSMARLLIPELSANLDQSEIFDRMDLNATSFMSRNIKLLMEGIDDLSQEAYKFQQYHRNATKAKASLDAQLEARRAENEQLRAKGLPEKSEAELVANHKTPTPPSRLGSLLVTAQINTFCKQVSDFSGQSFGKLYIAKATQPEAEE.

Residues 1–28 are disordered; the sequence is MATRQPYQKKFQSRDQREQTSSQQAPNS. Residues 19-28 show a composition bias toward polar residues; that stretch reads QTSSQQAPNS. Residues 33-174 form the MPN domain; that stretch reads VTVDALVVMK…LSAFRLSNKA (142 aa).

Belongs to the eIF-3 subunit H family. As to quaternary structure, component of the eukaryotic translation initiation factor 3 (eIF-3) complex.

It localises to the cytoplasm. Functionally, component of the eukaryotic translation initiation factor 3 (eIF-3) complex, which is involved in protein synthesis of a specialized repertoire of mRNAs and, together with other initiation factors, stimulates binding of mRNA and methionyl-tRNAi to the 40S ribosome. The eIF-3 complex specifically targets and initiates translation of a subset of mRNAs involved in cell proliferation. This chain is Eukaryotic translation initiation factor 3 subunit H, found in Monosiga brevicollis (Choanoflagellate).